Consider the following 594-residue polypeptide: Cytoplasmic polyadenylation element-binding protein 2 (594 aa).

The span at 72-90 shows a compositional bias: basic and acidic residues; sequence KEREKVDEEKEGVERREEN. Disordered regions lie at residues 72-91 and 367-388; these read KERE…EENG and GGGF…STSE. Over residues 367–378 the composition is skewed to gly residues; it reads GGGFNSGSGSGN. Positions 458 to 540 constitute an RRM domain; that stretch reads LVAFIGGVPR…KRVEIKPYFF (83 aa).

Cytoplasmic polyadenylation element binding protein that binds to and regulates the translation of specific mRNAs. The protein is Cytoplasmic polyadenylation element-binding protein 2 (cpb-2) of Caenorhabditis japonica.